Consider the following 492-residue polypeptide: GTPase Der (492 aa).

EngA-type G domains follow at residues 3-167 and 207-382; these read FTLA…EKFE and LQVA…DVWN. GTP contacts are provided by residues 9 to 16, 56 to 60, 119 to 122, 213 to 220, 260 to 264, and 325 to 328; these read GRPNVGKS, DSAGL, NKSE, GRPNAGKS, DTAGM, and NKWD. The KH-like domain occupies 383–469; the sequence is RRVPTAALNR…RLTLRGQGDK (87 aa). Residues 461 to 492 are disordered; the sequence is LTLRGQGDKNPYKGKKKSTPSRLRKHLEGRKS. Residues 472–492 show a composition bias toward basic residues; sequence YKGKKKSTPSRLRKHLEGRKS.

This sequence belongs to the TRAFAC class TrmE-Era-EngA-EngB-Septin-like GTPase superfamily. EngA (Der) GTPase family. In terms of assembly, associates with the 50S ribosomal subunit.

Functionally, GTPase that plays an essential role in the late steps of ribosome biogenesis. This chain is GTPase Der, found in Ruegeria sp. (strain TM1040) (Silicibacter sp.).